Here is a 238-residue protein sequence, read N- to C-terminus: Large ribosomal subunit protein uL2 (238 aa).

Positions 198-238 (NHPHGGGSHQSPSFPTTVSRNAPPGRKVGHIAARSTGRRKR) are disordered. Positions 206 to 217 (HQSPSFPTTVSR) are enriched in polar residues.

This sequence belongs to the universal ribosomal protein uL2 family. As to quaternary structure, part of the 50S ribosomal subunit. Forms a bridge to the 30S subunit in the 70S ribosome.

In terms of biological role, one of the primary rRNA binding proteins. Required for association of the 30S and 50S subunits to form the 70S ribosome, for tRNA binding and peptide bond formation. It has been suggested to have peptidyltransferase activity; this is somewhat controversial. Makes several contacts with the 16S rRNA in the 70S ribosome. The protein is Large ribosomal subunit protein uL2 of Hyperthermus butylicus (strain DSM 5456 / JCM 9403 / PLM1-5).